The sequence spans 399 residues: Bombesin receptor subtype-3 (399 aa).

The Extracellular segment spans residues 1 to 41; sequence MSQRQPQSPNQTLISITNDTETSSSAVSNDTTPKGWTGDNS. Asn-10, Asn-18, and Asn-29 each carry an N-linked (GlcNAc...) asparagine glycan. A helical membrane pass occupies residues 42 to 63; the sequence is PGIEALCAIYITYAVIISVGIL. The Cytoplasmic portion of the chain corresponds to 64 to 82; that stretch reads GNAILIKVFFKTKSMQTVP. The chain crosses the membrane as a helical span at residues 83 to 103; the sequence is NIFITSLAFGDLLLLLTCVPV. The Extracellular portion of the chain corresponds to 104-121; sequence DATHYLAEGWLFGKVGCK. A disulfide bridge links Cys-120 with Cys-203. A helical membrane pass occupies residues 122 to 143; the sequence is VLSFIRLTSVGVSVFTLTILSA. The Cytoplasmic portion of the chain corresponds to 144-163; the sequence is DRYKAVVKPLERQPSNAILK. A helical transmembrane segment spans residues 164–184; the sequence is TCAKAGGIWIMAMIFALPEAI. Residues 185-220 are Extracellular-facing; the sequence is FSNVYTFQDPNRNVTFESCNSYPISERLLQEIHSLL. A helical transmembrane segment spans residues 221–241; that stretch reads CFLVFYIIPLSIISVYYSLIA. Residues 242-272 lie on the Cytoplasmic side of the membrane; the sequence is RTLYKSTLNIPTEEQSHARKQIESRKRIAKT. A helical transmembrane segment spans residues 273-293; it reads VLVLVALFALCWLPNHLLYLY. The Extracellular segment spans residues 294–313; the sequence is HSFTYESYAEPSDVPFVVTI. A helical transmembrane segment spans residues 314–333; it reads FSRVLAFSNSCVNPFALYWL. The Cytoplasmic segment spans residues 334 to 399; that stretch reads SKTFQKHFKA…STAKKGEDKV (66 aa). Cys-347 carries the S-palmitoyl cysteine lipid modification.

The protein belongs to the G-protein coupled receptor 1 family. Interacts with C6orf89.

Its subcellular location is the cell membrane. Role in sperm cell division, maturation, or function. This receptor mediates its action by association with G proteins that activate a phosphatidylinositol-calcium second messenger system. The sequence is that of Bombesin receptor subtype-3 (Brs3) from Rattus norvegicus (Rat).